A 135-amino-acid chain; its full sequence is Large ribosomal subunit protein mL54 (135 aa).

It belongs to the mitochondrion-specific ribosomal protein mL54 family. As to quaternary structure, component of the mitochondrial ribosome large subunit (39S) which comprises a 16S rRNA and about 50 distinct proteins.

The protein localises to the mitochondrion. This Danio rerio (Zebrafish) protein is Large ribosomal subunit protein mL54 (mrpl54).